The primary structure comprises 368 residues: Meiotic driver wtf23 (368 aa).

The tract at residues 1–98 is disordered; sequence MKNKYYPLRS…SSGTADNSST (98 aa). The segment covering 11–29 has biased composition (basic and acidic residues); sequence SMDELSAKNDNEIDLEKGP. 2 stretches are compositionally biased toward polar residues: residues 57–72 and 89–98; these read GANN…STTP and SSGTADNSST. 7 consecutive transmembrane segments (helical) span residues 105–124, 139–158, 170–192, 202–221, 234–256, 266–283, and 328–350; these read FLSF…YLTY, YFGV…WYFY, IFLA…VISI, MIII…GCVK, STCT…FWTF, VFLL…TMFL, and GIAF…FRGG.

This sequence belongs to the WTF family. Homomer. Forms protein aggregates. The two isoforms can interact with each other and with themselves. High sequence similarity is required for their interaction.

It is found in the spore membrane. It localises to the vacuole membrane. The protein resides in the ascus epiplasm. The protein localises to the cytoplasm. Its subcellular location is the endoplasmic reticulum membrane. Functionally, promotes unequal transmission of alleles from the parental zygote to progeny spores by acting as poison/antidote system where the poison and antidote proteins are produced from the same locus; the poison component is trans-acting and targets all spores within an ascus whereas the antidote component is spore-specific, leading to poisoning of all progeny that do not inherit the allele. Its function is as follows. Localizes isoform 2 to the vacuole thereby facilitating its degradation. In terms of biological role, forms toxic aggregates that disrupt spore maturation. The polypeptide is Meiotic driver wtf23 (Schizosaccharomyces pombe (strain 972 / ATCC 24843) (Fission yeast)).